A 332-amino-acid polypeptide reads, in one-letter code: D-galactose/methyl-galactoside binding periplasmic protein MglB (332 aa).

The N-terminal stretch at 1–23 (MNKKVLTLSAVMASMLFGAAAHA) is a signal peptide. Residues aspartate 37 and asparagine 114 each contribute to the beta-D-galactose site. Residues aspartate 37 and asparagine 114 each contribute to the beta-D-glucose site. Ca(2+) is bound by residues aspartate 157, asparagine 159, aspartate 161, glutamine 163, and glutamine 165. Beta-D-galactose contacts are provided by histidine 175, aspartate 177, and arginine 181. Beta-D-glucose contacts are provided by histidine 175, aspartate 177, and arginine 181. Residue glutamate 228 coordinates Ca(2+). Residues asparagine 234, aspartate 259, and asparagine 279 each coordinate beta-D-galactose. Beta-D-glucose is bound by residues asparagine 234, aspartate 259, and asparagine 279.

The protein belongs to the bacterial solute-binding protein 2 family. As to quaternary structure, the ABC transporter complex is composed of one ATP-binding protein (MglA), two transmembrane proteins (MglC) and a solute-binding protein (MglB).

Its subcellular location is the periplasm. Functionally, part of the ABC transporter complex MglABC involved in galactose/methyl galactoside import. In addition, binds D-galactose and D-glucose and plays a role in the chemotaxis towards these two sugars by interacting with the Trg chemoreceptor. The polypeptide is D-galactose/methyl-galactoside binding periplasmic protein MglB (mglB) (Escherichia coli O6:H1 (strain CFT073 / ATCC 700928 / UPEC)).